Consider the following 203-residue polypeptide: Ribosome hibernation promotion factor (203 aa).

It belongs to the HPF/YfiA ribosome-associated protein family. Long HPF subfamily. As to quaternary structure, interacts with 100S ribosomes.

The protein localises to the cytoplasm. Required for dimerization of active 70S ribosomes into 100S ribosomes in stationary phase; 100S ribosomes are translationally inactive and sometimes present during exponential growth. This Bradyrhizobium diazoefficiens (strain JCM 10833 / BCRC 13528 / IAM 13628 / NBRC 14792 / USDA 110) protein is Ribosome hibernation promotion factor.